The primary structure comprises 385 residues: 1-deoxy-D-xylulose 5-phosphate reductoisomerase (385 aa).

NADPH-binding residues include threonine 10, glycine 11, serine 12, isoleucine 13, asparagine 38, and asparagine 124. Position 125 (lysine 125) interacts with 1-deoxy-D-xylulose 5-phosphate. Residue glutamate 126 coordinates NADPH. Residue aspartate 150 coordinates Mn(2+). 1-deoxy-D-xylulose 5-phosphate contacts are provided by serine 151, glutamate 152, serine 176, and histidine 199. Glutamate 152 contacts Mn(2+). Glycine 205 serves as a coordination point for NADPH. 4 residues coordinate 1-deoxy-D-xylulose 5-phosphate: serine 212, asparagine 217, lysine 218, and glutamate 221. Glutamate 221 is a binding site for Mn(2+).

The protein belongs to the DXR family. It depends on Mg(2+) as a cofactor. The cofactor is Mn(2+).

It catalyses the reaction 2-C-methyl-D-erythritol 4-phosphate + NADP(+) = 1-deoxy-D-xylulose 5-phosphate + NADPH + H(+). It participates in isoprenoid biosynthesis; isopentenyl diphosphate biosynthesis via DXP pathway; isopentenyl diphosphate from 1-deoxy-D-xylulose 5-phosphate: step 1/6. In terms of biological role, catalyzes the NADPH-dependent rearrangement and reduction of 1-deoxy-D-xylulose-5-phosphate (DXP) to 2-C-methyl-D-erythritol 4-phosphate (MEP). This chain is 1-deoxy-D-xylulose 5-phosphate reductoisomerase, found in Clostridium acetobutylicum (strain ATCC 824 / DSM 792 / JCM 1419 / IAM 19013 / LMG 5710 / NBRC 13948 / NRRL B-527 / VKM B-1787 / 2291 / W).